Reading from the N-terminus, the 544-residue chain is Chaperonin GroEL 2 (544 aa).

ATP-binding positions include T30–P33, D87–T91, G415, N480–A482, and D496.

This sequence belongs to the chaperonin (HSP60) family. Forms a cylinder of 14 subunits composed of two heptameric rings stacked back-to-back. Interacts with the co-chaperonin GroES.

It is found in the cytoplasm. The catalysed reaction is ATP + H2O + a folded polypeptide = ADP + phosphate + an unfolded polypeptide.. Functionally, together with its co-chaperonin GroES, plays an essential role in assisting protein folding. The GroEL-GroES system forms a nano-cage that allows encapsulation of the non-native substrate proteins and provides a physical environment optimized to promote and accelerate protein folding. The chain is Chaperonin GroEL 2 from Albidiferax ferrireducens (strain ATCC BAA-621 / DSM 15236 / T118) (Rhodoferax ferrireducens).